Here is a 248-residue protein sequence, read N- to C-terminus: tRNA (guanine-N(1)-)-methyltransferase (248 aa).

S-adenosyl-L-methionine is bound by residues G116 and 135 to 140 (IGDFVL).

The protein belongs to the RNA methyltransferase TrmD family. Homodimer.

The protein localises to the cytoplasm. It carries out the reaction guanosine(37) in tRNA + S-adenosyl-L-methionine = N(1)-methylguanosine(37) in tRNA + S-adenosyl-L-homocysteine + H(+). In terms of biological role, specifically methylates guanosine-37 in various tRNAs. This Anaeromyxobacter sp. (strain Fw109-5) protein is tRNA (guanine-N(1)-)-methyltransferase.